A 193-amino-acid chain; its full sequence is MFIAVEGIDGSGKTTVIAEVAKALPRVYVTREPSGGPIGRLLKEWALRGGTADPHVDALLFAADRVEHYKREIEPKLREGYIVITERYVESSIAYQGAAGVPIEYILYINSVVPRPHLTIILDVDPAEAIKRIKARERLEKFEDVEFLRRVREIYLTRARAEGYPVIDAGRPAGEVAKDVVAIIERAMASLRR.

Residue 7 to 14 coordinates ATP; it reads GIDGSGKT.

It belongs to the thymidylate kinase family.

It carries out the reaction dTMP + ATP = dTDP + ADP. This chain is Probable thymidylate kinase, found in Pyrobaculum calidifontis (strain DSM 21063 / JCM 11548 / VA1).